The sequence spans 240 residues: Ribonuclease 3 (240 aa).

In terms of domain architecture, RNase III spans 9–141 (VEEFQKETGI…LLAAIYLDQG (133 aa)). Glu54 is a binding site for Mg(2+). Asp58 is a catalytic residue. Residues Asp127 and Glu130 each coordinate Mg(2+). The active site involves Glu130. The region spanning 168 to 237 (DYKTALQEIV…ARIAYEKLLK (70 aa)) is the DRBM domain.

This sequence belongs to the ribonuclease III family. As to quaternary structure, homodimer. Mg(2+) is required as a cofactor.

It is found in the cytoplasm. It carries out the reaction Endonucleolytic cleavage to 5'-phosphomonoester.. Functionally, digests double-stranded RNA. Involved in the processing of primary rRNA transcript to yield the immediate precursors to the large and small rRNAs (23S and 16S). Also processes some mRNAs, and tRNAs when they are encoded in the rRNA operon. Probably processes pre-crRNA and tracrRNA of type II CRISPR loci if present in the organism. This Thermotoga maritima (strain ATCC 43589 / DSM 3109 / JCM 10099 / NBRC 100826 / MSB8) protein is Ribonuclease 3 (rnc).